The chain runs to 293 residues: Probable porphobilinogen deaminase (293 aa).

Cys-233 bears the S-(dipyrrolylmethanemethyl)cysteine mark.

It belongs to the HMBS family. Requires dipyrromethane as cofactor.

It catalyses the reaction 4 porphobilinogen + H2O = hydroxymethylbilane + 4 NH4(+). It functions in the pathway porphyrin-containing compound metabolism; protoporphyrin-IX biosynthesis; coproporphyrinogen-III from 5-aminolevulinate: step 2/4. Functionally, tetrapolymerization of the monopyrrole PBG into the hydroxymethylbilane pre-uroporphyrinogen in several discrete steps. The sequence is that of Probable porphobilinogen deaminase from Saccharolobus islandicus (strain Y.G.57.14 / Yellowstone #1) (Sulfolobus islandicus).